The sequence spans 217 residues: tRNA (guanine-N(7)-)-methyltransferase (217 aa).

4 residues coordinate S-adenosyl-L-methionine: E44, E69, D96, and D118. D118 is a catalytic residue. Residues K122, D154, and 191–194 (TEYE) contribute to the substrate site.

It belongs to the class I-like SAM-binding methyltransferase superfamily. TrmB family.

It catalyses the reaction guanosine(46) in tRNA + S-adenosyl-L-methionine = N(7)-methylguanosine(46) in tRNA + S-adenosyl-L-homocysteine. It participates in tRNA modification; N(7)-methylguanine-tRNA biosynthesis. In terms of biological role, catalyzes the formation of N(7)-methylguanine at position 46 (m7G46) in tRNA. This Bacillus mycoides (strain KBAB4) (Bacillus weihenstephanensis) protein is tRNA (guanine-N(7)-)-methyltransferase.